Consider the following 538-residue polypeptide: Cytochrome P450 52-M1 (538 aa).

A helical transmembrane segment spans residues 18-38; the sequence is GLLPLLFVAFLVLHEPIWLLW. A heme-binding site is contributed by cysteine 484.

The protein belongs to the cytochrome P450 family. Heme is required as a cofactor.

The protein resides in the membrane. It carries out the reaction an omega-methyl-long-chain fatty acid + reduced [NADPH--hemoprotein reductase] + O2 = an omega-hydroxy-long-chain fatty acid + oxidized [NADPH--hemoprotein reductase] + H2O + H(+). It catalyses the reaction an (omega-1)-ethyl fatty acid + reduced [NADPH--hemoprotein reductase] + O2 = an (omega-1)-hydroxy-long-chain fatty acid + oxidized [NADPH--hemoprotein reductase] + H2O + H(+). The catalysed reaction is (9Z)-octadecenoate + reduced [NADPH--hemoprotein reductase] + O2 = 18-hydroxy-(9Z)-octadecenoate + oxidized [NADPH--hemoprotein reductase] + H2O + H(+). The enzyme catalyses (9Z)-octadecenoate + reduced [NADPH--hemoprotein reductase] + O2 = 17-hydroxy-(9Z)-octadecenoate + oxidized [NADPH--hemoprotein reductase] + H2O + H(+). It carries out the reaction (9Z,12Z)-octadecadienoate + reduced [NADPH--hemoprotein reductase] + O2 = 18-hydroxy-(9Z,12Z)-octadecadienoate + oxidized [NADPH--hemoprotein reductase] + H2O + H(+). It catalyses the reaction (9Z,12Z)-octadecadienoate + reduced [NADPH--hemoprotein reductase] + O2 = 17-hydroxy-(9Z,12Z)-octadecadienoate + oxidized [NADPH--hemoprotein reductase] + H2O + H(+). The catalysed reaction is hexadecanoate + reduced [NADPH--hemoprotein reductase] + O2 = 16-hydroxyhexadecanoate + oxidized [NADPH--hemoprotein reductase] + H2O + H(+). The enzyme catalyses (9Z)-hexadecenoate + reduced [NADPH--hemoprotein reductase] + O2 = (9Z)-16-hydroxyhexadec-9-enoate + oxidized [NADPH--hemoprotein reductase] + H2O + H(+). It carries out the reaction octadecanoate + reduced [NADPH--hemoprotein reductase] + O2 = 18-hydroxyoctadecanoate + oxidized [NADPH--hemoprotein reductase] + H2O + H(+). In terms of biological role, catalyzes the first step of sophorolipid biosynthesis. Catalyzes the terminal (at the omega-position) or subterminal (at the omega(-1)-position) hydroxylation of a fatty acid. This converts the fatty acid to a substrate for the subsequent glycosyltransferase reactions. Oleic acid is the preferred substrate, but it acts on various other C-16, C-18 and C-20 saturated and unsaturated fatty acids, namely palmitic, palmitoleic, stearic, linoleic, cis-9,10-epoxystearic, trans-9,10-epoxystearic and arachidonic acid. The polypeptide is Cytochrome P450 52-M1 (Starmerella bombicola (Yeast)).